We begin with the raw amino-acid sequence, 307 residues long: Aspartate carbamoyltransferase catalytic subunit (307 aa).

Carbamoyl phosphate is bound by residues arginine 58 and threonine 59. Lysine 86 provides a ligand contact to L-aspartate. Residues arginine 108, histidine 138, and glutamine 141 each coordinate carbamoyl phosphate. Arginine 171 and arginine 223 together coordinate L-aspartate. Carbamoyl phosphate contacts are provided by alanine 264 and proline 265.

It belongs to the aspartate/ornithine carbamoyltransferase superfamily. ATCase family. As to quaternary structure, heterododecamer (2C3:3R2) of six catalytic PyrB chains organized as two trimers (C3), and six regulatory PyrI chains organized as three dimers (R2).

The enzyme catalyses carbamoyl phosphate + L-aspartate = N-carbamoyl-L-aspartate + phosphate + H(+). Its pathway is pyrimidine metabolism; UMP biosynthesis via de novo pathway; (S)-dihydroorotate from bicarbonate: step 2/3. Functionally, catalyzes the condensation of carbamoyl phosphate and aspartate to form carbamoyl aspartate and inorganic phosphate, the committed step in the de novo pyrimidine nucleotide biosynthesis pathway. The protein is Aspartate carbamoyltransferase catalytic subunit of Streptococcus suis (strain 98HAH33).